Reading from the N-terminus, the 189-residue chain is Testis-expressed protein 22 (189 aa).

The segment at 1 to 120 (MDSRQQRPQR…TQSVPTPPLQ (120 aa)) is disordered. A compositionally biased stretch (low complexity) spans 14 to 24 (QWQLAQEQRQQ). Residues 70–87 (IDERRRLALQRMQERTDT) show a composition bias toward basic and acidic residues. The span at 103–114 (QQTETSPSTQSV) shows a compositional bias: low complexity.

As to expression, mainly expressed in spermatocytes and spermatids in testis.

Its subcellular location is the cytoplasm. The protein localises to the cytoplasmic vesicle. The protein resides in the secretory vesicle. It is found in the acrosome. This chain is Testis-expressed protein 22 (Tex22), found in Mus musculus (Mouse).